The primary structure comprises 545 residues: ATP synthase subunit alpha (545 aa).

Position 174–181 (174–181 (GDRKTGKT)) interacts with ATP.

This sequence belongs to the ATPase alpha/beta chains family. F-type ATPases have 2 components, CF(1) - the catalytic core - and CF(0) - the membrane proton channel. CF(1) has five subunits: alpha(3), beta(3), gamma(1), delta(1), epsilon(1). CF(0) has three main subunits: a(1), b(2) and c(9-12). The alpha and beta chains form an alternating ring which encloses part of the gamma chain. CF(1) is attached to CF(0) by a central stalk formed by the gamma and epsilon chains, while a peripheral stalk is formed by the delta and b chains.

The protein resides in the cell membrane. It carries out the reaction ATP + H2O + 4 H(+)(in) = ADP + phosphate + 5 H(+)(out). Produces ATP from ADP in the presence of a proton gradient across the membrane. The alpha chain is a regulatory subunit. The chain is ATP synthase subunit alpha from Cutibacterium acnes (strain DSM 16379 / KPA171202) (Propionibacterium acnes).